Reading from the N-terminus, the 237-residue chain is uncharacterized protein (237 aa).

Residues 213-237 (GQGKYLKLDSNTTENKTTKQNETGG) are disordered. Residues 223–237 (NTTENKTTKQNETGG) are compositionally biased toward low complexity.

This is an uncharacterized protein from Methanothermobacter thermautotrophicus (Methanobacterium thermoformicicum).